The primary structure comprises 112 residues: Tetracenomycin-F1 monooxygenase (112 aa).

Residues 11 to 100 form the ABM domain; sequence FTLVNVFGVA…SRPKPIFCEV (90 aa).

Homotrimer.

The catalysed reaction is tetracenomycin F1 + O2 = tetracenomycin D3 + H2O + H(+). The protein operates within antibiotic biosynthesis; tetracenomycin C biosynthesis. Its activity is regulated as follows. Inhibited by p-chloromercuribenzoic acid, N-ethylmaleimide and diethyl pyrocarbonate. Functionally, oxygenase required for conversion of tetracenomycin F1 to tetracenomycin D3. The protein is Tetracenomycin-F1 monooxygenase (tcmH) of Streptomyces glaucescens.